Here is a 130-residue protein sequence, read N- to C-terminus: Small ribosomal subunit protein uS8 (130 aa).

It belongs to the universal ribosomal protein uS8 family. As to quaternary structure, part of the 30S ribosomal subunit.

One of the primary rRNA binding proteins, it binds directly to 16S rRNA central domain where it helps coordinate assembly of the platform of the 30S subunit. The protein is Small ribosomal subunit protein uS8 of Pyrobaculum arsenaticum (strain DSM 13514 / JCM 11321 / PZ6).